We begin with the raw amino-acid sequence, 293 residues long: Serine/threonine-protein phosphatase 2A catalytic subunit beta isoform (293 aa).

Residues aspartate 41, histidine 43, aspartate 69, and asparagine 101 each contribute to the Mn(2+) site. Catalysis depends on histidine 102, which acts as the Proton donor. Mn(2+) is bound by residues histidine 151 and histidine 225. Tyrosine 291 carries the phosphotyrosine modification. Leucine 293 carries the post-translational modification Leucine methyl ester.

The protein belongs to the PPP phosphatase family. PP-1 subfamily. As to quaternary structure, found in a complex with at least ARL2, PPP2CB, PPP2R1A, PPP2R2A, PPP2R5E and TBCD. Interacts with TBCD. PP2A consists of a common heterodimeric core enzyme (composed of a 36 kDa catalytic subunit (subunit C) and a 65 kDa constant regulatory subunit (PR65) (subunit A)) that associates with a variety of regulatory subunits. Proteins that associate with the core dimer include three families of regulatory subunits B (the R2/B/PR55/B55, R3/B''/PR72/PR130/PR59 and R5/B'/B56 families), the 48 kDa variable regulatory subunit, viral proteins, and cell signaling molecules. Binds PPME1. May indirectly interact with SGO1, most probably through regulatory B56 subunits. Interacts with CTTNBP2NL. Interacts with PTPA. Part of the core of STRIPAK complexes composed of PP2A catalytic and scaffolding subunits, the striatins (PP2A regulatory subunits), the striatin-associated proteins MOB4, STRIP1 and STRIP2, PDCD10 and members of the STE20 kinases, such as STK24 and STK26. It depends on Mn(2+) as a cofactor. Reversibly methyl esterified on Leu-293 by leucine carboxyl methyltransferase 1 (Lcmt1) and protein phosphatase methylesterase 1 (PPME1). Carboxyl methylation influences the affinity of the catalytic subunit for the different regulatory subunits, thereby modulating the PP2A holoenzyme's substrate specificity, enzyme activity and cellular localization. In terms of processing, phosphorylation of either threonine (by autophosphorylation-activated protein kinase) or tyrosine results in inactivation of the phosphatase. Auto-dephosphorylation has been suggested as a mechanism for reactivation. Post-translationally, may be monoubiquitinated by NOSIP.

It localises to the cytoplasm. The protein localises to the nucleus. It is found in the chromosome. The protein resides in the centromere. Its subcellular location is the cytoskeleton. It localises to the spindle pole. It carries out the reaction O-phospho-L-seryl-[protein] + H2O = L-seryl-[protein] + phosphate. It catalyses the reaction O-phospho-L-threonyl-[protein] + H2O = L-threonyl-[protein] + phosphate. Functionally, catalytic subunit of protein phosphatase 2A (PP2A), a serine/threonine phosphatase involved in the regulation of a wide variety of enzymes, signal transduction pathways, and cellular events. PP2A can modulate the activity of phosphorylase B kinase, casein kinase 2, mitogen-stimulated S6 kinase, and MAP-2 kinase. Part of the striatin-interacting phosphatase and kinase (STRIPAK) complexes. STRIPAK complexes have critical roles in protein (de)phosphorylation and are regulators of multiple signaling pathways including Hippo, MAPK, nuclear receptor and cytoskeleton remodeling. Different types of STRIPAK complexes are involved in a variety of biological processes such as cell growth, differentiation, apoptosis, metabolism and immune regulation. The chain is Serine/threonine-protein phosphatase 2A catalytic subunit beta isoform (PPP2CB) from Sus scrofa (Pig).